We begin with the raw amino-acid sequence, 410 residues long: MTHAYTKVRQALCYGSATLGAAALAALIAAGSAAAAESHGVATAKAAAADLAAGKADDPVVLKAAPINARRVFVYDPKHFAAISQFYMIDGDTARVVGTADGGFLSNPVVASDGSFFGQASTVYERIARGKRTDYVELLDPQTNNPIADIELPNSPRFLVGTYPWMTALTPNNKTLLFYQFSPQPAVGVVDLAGKKFDRMIEVPDCYHIFPSSNDTFFMHCRDGSLLKVGIGADGKSQTKRTEIFHKENEYLINHPAYSPKSGRLVWPTYTGKIFQIDLSSQDAKFLPAIEAFTDAEKKEGWAPGGWQQVAYHRESDRIFLLGDQRAASKHKAPSRFLFVIDAKTGKRINKIELKHEIDSVGVSQDAKPQLYALSTGDKALYIFDPETGKEVSSVNQLGAGPQVVMTSDM.

An N-terminal signal peptide occupies residues 1-35 (MTHAYTKVRQALCYGSATLGAAALAALIAAGSAAA).

It belongs to the aromatic amine dehydrogenase heavy chain family. Tetramer of two light and two heavy chains.

Its subcellular location is the periplasm. It carries out the reaction 2 oxidized [amicyanin] + methylamine + H2O = 2 reduced [amicyanin] + formaldehyde + NH4(+) + 2 H(+). Its function is as follows. Methylamine dehydrogenase carries out the oxidation of methylamine. Electrons are passed from methylamine dehydrogenase to amicyanin. The chain is Methylamine dehydrogenase heavy chain (mauB) from Methylorubrum extorquens (strain ATCC 14718 / DSM 1338 / JCM 2805 / NCIMB 9133 / AM1) (Methylobacterium extorquens).